The sequence spans 393 residues: Chalcone synthase G (393 aa).

The active site involves Cys-164.

This sequence belongs to the thiolase-like superfamily. Chalcone/stilbene synthases family. Expressed in seedlings after illumination with UV light. No expression detectable in flowers. It is not known for sure whether CHSG encodes a chalcone synthase or a very closely related condensing enzyme.

It catalyses the reaction (E)-4-coumaroyl-CoA + 3 malonyl-CoA + 3 H(+) = 2',4,4',6'-tetrahydroxychalcone + 3 CO2 + 4 CoA. It participates in secondary metabolite biosynthesis; flavonoid biosynthesis. Functionally, the primary product of this enzyme is 4,2',4',6'-tetrahydroxychalcone (also termed naringenin-chalcone or chalcone) which can under specific conditions spontaneously isomerize into naringenin. The polypeptide is Chalcone synthase G (CHSG) (Petunia hybrida (Petunia)).